Here is a 406-residue protein sequence, read N- to C-terminus: UPF0754 membrane protein CYB_2931 (406 aa).

2 consecutive transmembrane segments (helical) span residues 1-21 (MAFW…YFTN) and 385-405 (IVNL…LFLL).

It belongs to the UPF0754 family.

The protein resides in the cell inner membrane. The chain is UPF0754 membrane protein CYB_2931 from Synechococcus sp. (strain JA-2-3B'a(2-13)) (Cyanobacteria bacterium Yellowstone B-Prime).